The chain runs to 496 residues: Probable malate:quinone oxidoreductase (496 aa).

The protein belongs to the MQO family. FAD is required as a cofactor.

The enzyme catalyses (S)-malate + a quinone = a quinol + oxaloacetate. It functions in the pathway carbohydrate metabolism; tricarboxylic acid cycle; oxaloacetate from (S)-malate (quinone route): step 1/1. In Flavobacterium psychrophilum (strain ATCC 49511 / DSM 21280 / CIP 103535 / JIP02/86), this protein is Probable malate:quinone oxidoreductase.